The chain runs to 434 residues: MSILKIHAREIFDSRGNPTVEVDLYTAKGLFRAAVPSGASTGIYEALELRDNDKTRFMGKGVSKAVEHINKTIAPALVSKKLNVVEQEKIDQLMIEMDGTENKSKFGANAILGVSLAVCKAGAVEKGVPLYRHIADLAGNPEVILPVPAFNVINGGSHAGNKLAMQEFMILPVGASSFREAMRIGAEVYHNLKNVIKEKYGKDATNVGDEGGFAPNILENKEALELLKSAIAKAGYTDQVVIGMDVAASEFYRAGKYDLDFKSPDDASRYITPDQLADLYKSFIKDYPVVSIEDPFDQDDWDAWQKFTATAGIQVVGDDLTVTNPKRIAKAAGEKSCNCLLLKVNQIGSVTESLQACKLAQSNGWGVMVSHRSGETEDTFIADLVVGLCTGQIKTGAPCRSERLAKYNQILRIEEELGSKAKFAGRSFRNPLAK.

N-acetylserine is present on serine 2. The residue at position 5 (lysine 5) is an N6-acetyllysine. Serine 40 contacts Mg(2+). Tyrosine 44 bears the Phosphotyrosine mark. Lysine 60 is subject to N6-acetyllysine; alternate. N6-succinyllysine; alternate is present on lysine 60. N6-acetyllysine is present on residues lysine 64 and lysine 71. Lysine 89 carries the post-translational modification N6-acetyllysine; alternate. Position 89 is an N6-succinyllysine; alternate (lysine 89). Lysine 126 carries the N6-acetyllysine modification. Substrate-binding residues include histidine 158 and glutamate 167. Residues lysine 193 and lysine 199 each carry the N6-acetyllysine modification. The residue at position 202 (lysine 202) is an N6-acetyllysine; alternate. Residue lysine 202 forms a Glycyl lysine isopeptide (Lys-Gly) (interchain with G-Cter in SUMO2); alternate linkage. Glutamate 210 (proton donor) is an active-site residue. N6-acetyllysine; alternate occurs at positions 228 and 233. Position 228 is an N6-succinyllysine; alternate (lysine 228). Lysine 228 is modified (N6-(2-hydroxyisobutyryl)lysine; alternate). Lysine 233 is subject to N6-malonyllysine; alternate. Aspartate 245 is a binding site for Mg(2+). At lysine 256 the chain carries N6-acetyllysine. The residue at position 263 (serine 263) is a Phosphoserine. Lysine 281 is subject to N6-acetyllysine; alternate. Lysine 281 is modified (N6-(2-hydroxyisobutyryl)lysine; alternate). Lysine 285 carries the N6-acetyllysine modification. Tyrosine 287 bears the Phosphotyrosine mark. Serine 291 bears the Phosphoserine mark. Glutamate 293 and aspartate 318 together coordinate Mg(2+). Substrate-binding residues include glutamate 293 and aspartate 318. N6-acetyllysine is present on residues lysine 335 and lysine 343. The active-site Proton acceptor is lysine 343. Residues serine 370 to serine 373 and lysine 394 each bind substrate. The interval alanine 405–lysine 434 is required for interaction with PLG. An N6-acetyllysine modification is found at lysine 406. The residue at position 420 (lysine 420) is an N6-acetyllysine; alternate. N6-succinyllysine; alternate is present on lysine 420. Position 420 is an N6-malonyllysine; alternate (lysine 420).

It belongs to the enolase family. As to quaternary structure, mammalian enolase is composed of 3 isozyme subunits, alpha, beta and gamma, which can form homodimers or heterodimers which are cell-type and development-specific. ENO1 interacts with PLG in the neuronal plasma membrane and promotes its activation. The C-terminal lysine is required for this binding. Interacts with ENO4 and PGAM2. Interacts with CMTM6. Mg(2+) serves as cofactor. In terms of processing, ISGylated. Post-translationally, lysine 2-hydroxyisobutyrylation (Khib) by p300/EP300 activates the phosphopyruvate hydratase activity. As to expression, expressed in flagella of epididymal sperm. The alpha/alpha homodimer is expressed in embryo and in most adult tissues. The alpha/beta heterodimer and the beta/beta homodimer are found in striated muscle, and the alpha/gamma heterodimer and the gamma/gamma homodimer in neurons.

The protein resides in the cytoplasm. Its subcellular location is the cell membrane. It catalyses the reaction (2R)-2-phosphoglycerate = phosphoenolpyruvate + H2O. It participates in carbohydrate degradation; glycolysis; pyruvate from D-glyceraldehyde 3-phosphate: step 4/5. In terms of biological role, glycolytic enzyme that catalyzes the conversion of 2-phosphoglycerate to phosphoenolpyruvate. In addition to glycolysis, involved in various processes such as growth control, hypoxia tolerance and allergic responses. May also function in the intravascular and pericellular fibrinolytic system due to its ability to serve as a receptor and activator of plasminogen on the cell surface of several cell-types such as leukocytes and neurons. Stimulates immunoglobulin production. In Rattus norvegicus (Rat), this protein is Alpha-enolase (Eno1).